The sequence spans 245 residues: 2,3-bisphosphoglycerate-dependent phosphoglycerate mutase (245 aa).

Substrate is bound by residues 8–15 (RHGQSLWN), 21–22 (TG), R60, 87–90 (ERHY), K98, 114–115 (RR), and 183–184 (GN). H9 (tele-phosphohistidine intermediate) is an active-site residue. The active-site Proton donor/acceptor is E87.

It belongs to the phosphoglycerate mutase family. BPG-dependent PGAM subfamily.

It catalyses the reaction (2R)-2-phosphoglycerate = (2R)-3-phosphoglycerate. The protein operates within carbohydrate degradation; glycolysis; pyruvate from D-glyceraldehyde 3-phosphate: step 3/5. Catalyzes the interconversion of 2-phosphoglycerate and 3-phosphoglycerate. The sequence is that of 2,3-bisphosphoglycerate-dependent phosphoglycerate mutase from Bacillus thuringiensis (strain Al Hakam).